We begin with the raw amino-acid sequence, 186 residues long: Two-component response regulator ARR6 (186 aa).

Residues 26–153 (HVLAVDDSHV…DVKRLRDSLM (128 aa)) enclose the Response regulatory domain. The residue at position 86 (Asp86) is a 4-aspartylphosphate.

Belongs to the ARR family. Type-A subfamily. In terms of processing, two-component system major event consists of a His-to-Asp phosphorelay between a sensor histidine kinase (HK) and a response regulator (RR). In plants, the His-to-Asp phosphorelay involves an additional intermediate named Histidine-containing phosphotransfer protein (HPt). This multistep phosphorelay consists of a His-Asp-His-Asp sequential transfer of a phosphate group between first a His and an Asp of the HK protein, followed by the transfer to a conserved His of the HPt protein and finally the transfer to an Asp in the receiver domain of the RR protein. In terms of tissue distribution, predominantly expressed in roots.

Its subcellular location is the nucleus. Functionally, functions as a response regulator involved in His-to-Asp phosphorelay signal transduction system. Phosphorylation of the Asp residue in the receiver domain activates the ability of the protein to promote the transcription of target genes. Type-A response regulators seem to act as negative regulators of the cytokinin signaling. The sequence is that of Two-component response regulator ARR6 (ARR6) from Arabidopsis thaliana (Mouse-ear cress).